The primary structure comprises 236 residues: DNA repair protein RecO (236 aa).

This sequence belongs to the RecO family.

Its function is as follows. Involved in DNA repair and RecF pathway recombination. The sequence is that of DNA repair protein RecO from Cellvibrio japonicus (strain Ueda107) (Pseudomonas fluorescens subsp. cellulosa).